A 154-amino-acid chain; its full sequence is Fimbrial protein (154 aa).

The propeptide at 1-6 (MKAQKG) is leader sequence. Phe7 carries the N-methylphenylalanine modification. The chain crosses the membrane as a helical span at residues 7–27 (FTLIELMIVVAIIGILAAIAI). The cysteines at positions 133 and 151 are disulfide-linked.

The protein belongs to the N-Me-Phe pilin family. In terms of assembly, the pili are polar flexible filaments of about 5.4 nanometers diameter and 2.5 micrometers average length; they consist of only a single polypeptide chain arranged in a helical configuration of five subunits per turn in the assembled pilus.

The protein resides in the fimbrium. It localises to the membrane. In Pseudomonas aeruginosa, this protein is Fimbrial protein (pilA).